The sequence spans 868 residues: DNA mismatch repair protein MutS (868 aa).

Gly623 to Ser630 provides a ligand contact to ATP.

Belongs to the DNA mismatch repair MutS family.

Its function is as follows. This protein is involved in the repair of mismatches in DNA. It is possible that it carries out the mismatch recognition step. This protein has a weak ATPase activity. In Magnetococcus marinus (strain ATCC BAA-1437 / JCM 17883 / MC-1), this protein is DNA mismatch repair protein MutS.